A 219-amino-acid chain; its full sequence is UPF0502 protein Gmet_0262 (219 aa).

Belongs to the UPF0502 family.

The protein is UPF0502 protein Gmet_0262 of Geobacter metallireducens (strain ATCC 53774 / DSM 7210 / GS-15).